Consider the following 120-residue polypeptide: Ribosome-binding factor A (120 aa).

It belongs to the RbfA family. In terms of assembly, monomer. Binds 30S ribosomal subunits, but not 50S ribosomal subunits or 70S ribosomes.

It localises to the cytoplasm. One of several proteins that assist in the late maturation steps of the functional core of the 30S ribosomal subunit. Associates with free 30S ribosomal subunits (but not with 30S subunits that are part of 70S ribosomes or polysomes). Required for efficient processing of 16S rRNA. May interact with the 5'-terminal helix region of 16S rRNA. In Chlorobaculum parvum (strain DSM 263 / NCIMB 8327) (Chlorobium vibrioforme subsp. thiosulfatophilum), this protein is Ribosome-binding factor A.